The following is a 688-amino-acid chain: Eukaryotic translation initiation factor 3 subunit B (688 aa).

A disordered region spans residues 1-28 (MAKKKGDQYDSDGAEDQDYDEEPVFEDP). The segment covering 9–25 (YDSDGAEDQDYDEEPVF) has biased composition (acidic residues). Residues 57 to 141 (NVIVVDNIPV…HTLLVNLFSD (85 aa)) enclose the RRM domain. 6 WD repeats span residues 208-246 (RERF…KINK), 247-287 (FAHS…EKRS), 291-329 (DGSS…LLDK), 332-367 (IKVQ…TLLE), 440-482 (EVKE…EPTM), and 527-572 (GDHY…KRVN). The stretch at 612–643 (DRVRMTRASKELLEKRAKLREQFVEYRAKRVN) forms a coiled coil.

Belongs to the eIF-3 subunit B family. Component of the eukaryotic translation initiation factor 3 (eIF-3) complex.

It localises to the cytoplasm. Its function is as follows. RNA-binding component of the eukaryotic translation initiation factor 3 (eIF-3) complex, which is involved in protein synthesis of a specialized repertoire of mRNAs and, together with other initiation factors, stimulates binding of mRNA and methionyl-tRNAi to the 40S ribosome. The eIF-3 complex specifically targets and initiates translation of a subset of mRNAs involved in cell proliferation. This Culex quinquefasciatus (Southern house mosquito) protein is Eukaryotic translation initiation factor 3 subunit B.